The sequence spans 935 residues: Isoleucine--tRNA ligase (935 aa).

The short motif at 58-68 (PYANGSIHVGH) is the 'HIGH' region element. Position 558 (E558) interacts with L-isoleucyl-5'-AMP. The short motif at 599 to 603 (KMSKS) is the 'KMSKS' region element. ATP is bound at residue K602. Zn(2+)-binding residues include C897, C900, C917, and C920.

The protein belongs to the class-I aminoacyl-tRNA synthetase family. IleS type 1 subfamily. In terms of assembly, monomer. The cofactor is Zn(2+).

Its subcellular location is the cytoplasm. The catalysed reaction is tRNA(Ile) + L-isoleucine + ATP = L-isoleucyl-tRNA(Ile) + AMP + diphosphate. Its function is as follows. Catalyzes the attachment of isoleucine to tRNA(Ile). As IleRS can inadvertently accommodate and process structurally similar amino acids such as valine, to avoid such errors it has two additional distinct tRNA(Ile)-dependent editing activities. One activity is designated as 'pretransfer' editing and involves the hydrolysis of activated Val-AMP. The other activity is designated 'posttransfer' editing and involves deacylation of mischarged Val-tRNA(Ile). The chain is Isoleucine--tRNA ligase from Francisella tularensis subsp. holarctica (strain OSU18).